Consider the following 465-residue polypeptide: tRNA-2-methylthio-N(6)-dimethylallyladenosine synthase (465 aa).

The MTTase N-terminal domain occupies 18 to 136; sequence RKLYIETYGC…LPNLVGAAEQ (119 aa). Residues C27, C63, C100, C174, C178, and C181 each contribute to the [4Fe-4S] cluster site. The Radical SAM core domain maps to 160–392; that stretch reads GGVHINGFVS…IALQNRLSEE (233 aa). One can recognise a TRAM domain in the interval 395-458; that stretch reads KRDISKTFEV…SATLFGEVVE (64 aa).

Belongs to the methylthiotransferase family. MiaB subfamily. Monomer. It depends on [4Fe-4S] cluster as a cofactor.

The protein localises to the cytoplasm. It catalyses the reaction N(6)-dimethylallyladenosine(37) in tRNA + (sulfur carrier)-SH + AH2 + 2 S-adenosyl-L-methionine = 2-methylsulfanyl-N(6)-dimethylallyladenosine(37) in tRNA + (sulfur carrier)-H + 5'-deoxyadenosine + L-methionine + A + S-adenosyl-L-homocysteine + 2 H(+). Its function is as follows. Catalyzes the methylthiolation of N6-(dimethylallyl)adenosine (i(6)A), leading to the formation of 2-methylthio-N6-(dimethylallyl)adenosine (ms(2)i(6)A) at position 37 in tRNAs that read codons beginning with uridine. The polypeptide is tRNA-2-methylthio-N(6)-dimethylallyladenosine synthase (Porphyromonas gingivalis (strain ATCC 33277 / DSM 20709 / CIP 103683 / JCM 12257 / NCTC 11834 / 2561)).